Reading from the N-terminus, the 288-residue chain is Protease HtpX (288 aa).

The next 2 helical transmembrane spans lie at Ile5 to Leu25 and Ser34 to Leu54. His140 provides a ligand contact to Zn(2+). Glu141 is an active-site residue. His144 contributes to the Zn(2+) binding site. 2 consecutive transmembrane segments (helical) span residues Leu155–Ile175 and Phe190–Ile210. Glu219 is a binding site for Zn(2+).

It belongs to the peptidase M48B family. Zn(2+) serves as cofactor.

It localises to the cell inner membrane. The sequence is that of Protease HtpX from Stenotrophomonas maltophilia (strain R551-3).